Here is a 188-residue protein sequence, read N- to C-terminus: Large ribosomal subunit protein eL18 (188 aa).

Lys-119 participates in a covalent cross-link: Glycyl lysine isopeptide (Lys-Gly) (interchain with G-Cter in SUMO2). Position 130 is a phosphoserine (Ser-130). Positions 151–188 (HFGKAPGTPHSHTKPYVRSKGRKFERARGRRASRGYKN) are disordered. Position 158 is a phosphothreonine (Thr-158). 2 stretches are compositionally biased toward basic residues: residues 161–171 (SHTKPYVRSKG) and 178–188 (RGRRASRGYKN). A Glycyl lysine isopeptide (Lys-Gly) (interchain with G-Cter in SUMO2) cross-link involves residue Lys-164.

Belongs to the eukaryotic ribosomal protein eL18 family. As to quaternary structure, component of the large ribosomal subunit.

The protein resides in the cytoplasm. Its subcellular location is the cytosol. The protein localises to the rough endoplasmic reticulum. In terms of biological role, component of the large ribosomal subunit. The ribosome is a large ribonucleoprotein complex responsible for the synthesis of proteins in the cell. This is Large ribosomal subunit protein eL18 (RPL18) from Homo sapiens (Human).